Consider the following 644-residue polypeptide: Exoribonuclease 2 (644 aa).

The RNB domain occupies 189 to 516 (RQDLTALNFV…NHRLLKAVIK (328 aa)). Residues 561–643 (NTRFAAEIID…ETRSIIARPA (83 aa)) enclose the S1 motif domain.

It belongs to the RNR ribonuclease family. RNase II subfamily.

The protein localises to the cytoplasm. It carries out the reaction Exonucleolytic cleavage in the 3'- to 5'-direction to yield nucleoside 5'-phosphates.. In terms of biological role, involved in mRNA degradation. Hydrolyzes single-stranded polyribonucleotides processively in the 3' to 5' direction. This chain is Exoribonuclease 2, found in Salmonella gallinarum (strain 287/91 / NCTC 13346).